The sequence spans 236 residues: Ribosome maturation protein SDO1 homolog (236 aa).

Belongs to the SDO1/SBDS family.

This is Ribosome maturation protein SDO1 homolog from Pyrococcus abyssi (strain GE5 / Orsay).